Here is a 479-residue protein sequence, read N- to C-terminus: Deoxyribodipyrimidine photo-lyase (479 aa).

One can recognise a Photolyase/cryptochrome alpha/beta domain in the interval 6–137 (SLKAVWFRRD…PFYTFEDAYL (132 aa)). Tyr-229 contacts FAD. DNA is bound at residue Arg-233. Residues 241 to 245 (TSRLS) and 278 to 285 (ELAWRDFY) contribute to the FAD site. Interaction with DNA regions lie at residues 278 to 285 (ELAWRDFY) and 344 to 345 (NR). 375–377 (DYD) provides a ligand contact to FAD. DNA is bound at residue Gln-407.

It belongs to the DNA photolyase class-1 family. Monomer. The cofactor is FAD. It depends on (6R)-5,10-methylene-5,6,7,8-tetrahydrofolate as a cofactor.

It carries out the reaction cyclobutadipyrimidine (in DNA) = 2 pyrimidine residues (in DNA).. Its function is as follows. Involved in repair of UV radiation-induced DNA damage. Catalyzes the light-dependent monomerization (300-600 nm) of cyclobutyl pyrimidine dimers (in cis-syn configuration), which are formed between adjacent bases on the same DNA strand upon exposure to ultraviolet radiation. This chain is Deoxyribodipyrimidine photo-lyase (phr), found in Alkalihalophilus pseudofirmus (strain ATCC BAA-2126 / JCM 17055 / OF4) (Bacillus pseudofirmus).